Consider the following 64-residue polypeptide: Small ribosomal subunit protein bS21 (64 aa).

A disordered region spans residues D26 to T64. Residues T43 to T64 are compositionally biased toward basic residues.

This sequence belongs to the bacterial ribosomal protein bS21 family.

This Dehalococcoides mccartyi (strain ATCC BAA-2100 / JCM 16839 / KCTC 5957 / BAV1) protein is Small ribosomal subunit protein bS21.